The sequence spans 263 residues: Insertion sequence IS21-like putative ATP-binding protein (263 aa).

Residue 114 to 121 participates in ATP binding; that stretch reads GPSGTGKT.

This sequence belongs to the IS21/IS1162 putative ATP-binding protein family.

This Bacteroides fragilis protein is Insertion sequence IS21-like putative ATP-binding protein (tnpB).